We begin with the raw amino-acid sequence, 417 residues long: MEKLKITGNGPLKGDITVSGAKNAALPILCASLLTADTLRLTNVPQLRDVMTTQKLLQGMGARVMTDNVHEFELSAAQVSDTCAPYELVKTMRASILVLGPTLARFGEASVSLPGGCAIGSRPVDQHIKGLAAMGADIVIEHGYVKARGRLKGARVVMDMVTVTGTENLLMAATLADGTTVLENAAREPEVTDLAVCLNKMGARISGLGTDRLVIEGVERLHGAEHAVMPDRIEAGTFLVAGAMTQGKLVLRNARAADMGAILDKLAEAGAVIEAGDDWIALDMPQRPRAVSLRTLPYPAFPTDMQAQFMAMNCIAEGVGSIKETIFENRFMHVPELIRMGARIDVEGNLATTHGVNKLSGATVMATDLRASASLVLAGLVADGTTIVDRIYHLDRGYEHIERKLGAVGAQIERTGG.

Phosphoenolpyruvate is bound at residue 22–23 (KN). R93 lines the UDP-N-acetyl-alpha-D-glucosamine pocket. The active-site Proton donor is C117. C117 is subject to 2-(S-cysteinyl)pyruvic acid O-phosphothioketal. UDP-N-acetyl-alpha-D-glucosamine is bound by residues 122-126 (RPVDQ), D304, and I326.

Belongs to the EPSP synthase family. MurA subfamily.

It localises to the cytoplasm. The catalysed reaction is phosphoenolpyruvate + UDP-N-acetyl-alpha-D-glucosamine = UDP-N-acetyl-3-O-(1-carboxyvinyl)-alpha-D-glucosamine + phosphate. It functions in the pathway cell wall biogenesis; peptidoglycan biosynthesis. Cell wall formation. Adds enolpyruvyl to UDP-N-acetylglucosamine. In Laribacter hongkongensis (strain HLHK9), this protein is UDP-N-acetylglucosamine 1-carboxyvinyltransferase.